A 147-amino-acid polypeptide reads, in one-letter code: Large ribosomal subunit protein uL13 (147 aa).

Belongs to the universal ribosomal protein uL13 family. Part of the 50S ribosomal subunit.

Functionally, this protein is one of the early assembly proteins of the 50S ribosomal subunit, although it is not seen to bind rRNA by itself. It is important during the early stages of 50S assembly. In Streptomyces avermitilis (strain ATCC 31267 / DSM 46492 / JCM 5070 / NBRC 14893 / NCIMB 12804 / NRRL 8165 / MA-4680), this protein is Large ribosomal subunit protein uL13.